Consider the following 247-residue polypeptide: uncharacterized protein (247 aa).

2 stretches are compositionally biased toward low complexity: residues M1 to P12 and P21 to Q43. 2 disordered regions span residues M1–Q43 and L157–I247. 2 stretches are compositionally biased toward basic and acidic residues: residues E170–K196 and K210–A229.

This is an uncharacterized protein from Bacillus subtilis (strain 168).